We begin with the raw amino-acid sequence, 359 residues long: Quinolinate synthase (359 aa).

Positions 81 and 99 each coordinate iminosuccinate. Cysteine 144 contacts [4Fe-4S] cluster. Residues 170 to 172 and serine 187 each bind iminosuccinate; that span reads YVN. Cysteine 229 contacts [4Fe-4S] cluster. Residues 255-257 and threonine 272 contribute to the iminosuccinate site; that span reads HPE. Cysteine 315 provides a ligand contact to [4Fe-4S] cluster.

Belongs to the quinolinate synthase family. Type 2 subfamily. [4Fe-4S] cluster is required as a cofactor.

Its subcellular location is the cytoplasm. It carries out the reaction iminosuccinate + dihydroxyacetone phosphate = quinolinate + phosphate + 2 H2O + H(+). The protein operates within cofactor biosynthesis; NAD(+) biosynthesis; quinolinate from iminoaspartate: step 1/1. Catalyzes the condensation of iminoaspartate with dihydroxyacetone phosphate to form quinolinate. This is Quinolinate synthase from Sinorhizobium medicae (strain WSM419) (Ensifer medicae).